Here is a 421-residue protein sequence, read N- to C-terminus: Subtilisin-like protease 2 (421 aa).

The N-terminal stretch at 1 to 16 is a signal peptide; sequence MQLLNFGLLLLPFVAG. Residues 17–122 constitute a propeptide that is removed on maturation; the sequence is DLAPQPEPLL…VHPDQHVYLA (106 aa). In terms of domain architecture, Inhibitor I9 spans 36–122; the sequence is QYIVTLKEGL…VHPDQHVYLA (87 aa). Residues 131-421 enclose the Peptidase S8 domain; sequence RWGLGYMSSK…ERKFTLPKYY (291 aa). Catalysis depends on charge relay system residues Asp-169 and His-201. 3 N-linked (GlcNAc...) asparagine glycosylation sites follow: Asn-248, Asn-261, and Asn-348. Ser-357 functions as the Charge relay system in the catalytic mechanism. N-linked (GlcNAc...) asparagine glycosylation is present at Asn-388.

It belongs to the peptidase S8 family.

Its subcellular location is the secreted. In terms of biological role, secreted subtilisin-like serine protease with keratinolytic activity that contributes to pathogenicity. The sequence is that of Subtilisin-like protease 2 (SUB2) from Trichophyton verrucosum (strain HKI 0517).